The chain runs to 22 residues: Bacteriocin serracin-P 23 kDa subunit (22 aa).

Functionally, major component of a prophage tail tube. Antibacterial activity against Gram-negative bacterium E.amylovora. The polypeptide is Bacteriocin serracin-P 23 kDa subunit (Serratia plymuthica).